A 372-amino-acid polypeptide reads, in one-letter code: tRNA-specific 2-thiouridylase MnmA (372 aa).

ATP-binding positions include 11-18 (GMSGGVDS) and Met37. An interaction with target base in tRNA region spans residues 97 to 99 (NPD). Cys102 acts as the Nucleophile in catalysis. Cys102 and Cys199 are oxidised to a cystine. ATP is bound at residue Gly126. Residues 149-151 (KDQ) form an interaction with tRNA region. Residue Cys199 is the Cysteine persulfide intermediate of the active site. Residues 309–310 (RY) form an interaction with tRNA region.

This sequence belongs to the MnmA/TRMU family.

It localises to the cytoplasm. The enzyme catalyses S-sulfanyl-L-cysteinyl-[protein] + uridine(34) in tRNA + AH2 + ATP = 2-thiouridine(34) in tRNA + L-cysteinyl-[protein] + A + AMP + diphosphate + H(+). Functionally, catalyzes the 2-thiolation of uridine at the wobble position (U34) of tRNA, leading to the formation of s(2)U34. The protein is tRNA-specific 2-thiouridylase MnmA of Staphylococcus aureus (strain bovine RF122 / ET3-1).